A 795-amino-acid chain; its full sequence is Mitochondrial inner membrane m-AAA protease component paraplegin (795 aa).

Residues 1 to 43 (MAVLLLLLRALRRGPGPGPRPLWGPGPAWSPGFPARPGRGRPY) constitute a mitochondrion transit peptide. Positions 44–105 (MASRPPGDLA…GGTFYFNTSR (62 aa)) are cleaved as a propeptide — removed in mature form. Residues 106-144 (LKQKNKEKDKSKGKAPEEDEEERRRRERDDQMYRERLRT) lie on the Mitochondrial matrix side of the membrane. The disordered stretch occupies residues 108–133 (QKNKEKDKSKGKAPEEDEEERRRRER). Residues 109–133 (KNKEKDKSKGKAPEEDEEERRRRER) are compositionally biased toward basic and acidic residues. Residues 145–165 (LLVIAVVMSLLNALSTSGGSI) traverse the membrane as a helical segment. Residues 166-248 (SWNDFVHEML…DRIPVSYKRT (83 aa)) are Mitochondrial intermembrane-facing. A helical transmembrane segment spans residues 249 to 269 (GFFGNALYSVGMTAVGLAILW). The Mitochondrial matrix portion of the chain corresponds to 270–795 (YVFRLAGMTG…LGGEEPTWPK (526 aa)). Residues Ala-312, Gly-352, Cys-353, Gly-354, Lys-355, Thr-356, and Leu-357 each coordinate ATP. Tyr-505 carries the 3'-nitrotyrosine modification. His-574 serves as a coordination point for Zn(2+). Residue Glu-575 is part of the active site. The Zn(2+) site is built by His-578 and Asp-650. Residues 701-795 (HEARLLVAKA…LGGEEPTWPK (95 aa)) are interaction with PPIF. The disordered stretch occupies residues 751–795 (PHGPKKMIAPQRWIDAQREKQDLGEEETEETQQPPLGGEEPTWPK).

The protein in the N-terminal section; belongs to the AAA ATPase family. In the C-terminal section; belongs to the peptidase M41 family. Forms heterooligomers with AFG3L2; the m-AAA protease is composed of heterohexamers of AFG3L2 and SPG7. Component of the mitochondrial permeability transition pore complex (mPTPC), at least composed of SPG7, VDAC1 and PPIF. Interacts with MAIP1. It depends on Zn(2+) as a cofactor. Upon import into the mitochondrion, the N-terminal transit peptide is cleaved by the mitochondrial-processing peptidase (MPP) to generate an intermediate form which undergoes a second proteolytic cleavage mediated by proteases AFG3L2 removing an additional N-terminal fragment to generate the proteolytically active mature form. Ubiquitous.

The protein localises to the mitochondrion inner membrane. It carries out the reaction ATP + H2O = ADP + phosphate + H(+). Its function is as follows. Catalytic component of the m-AAA protease, a protease that plays a key role in proteostasis of inner mitochondrial membrane proteins, and which is essential for axonal and neuron development. SPG7 possesses both ATPase and protease activities: the ATPase activity is required to unfold substrates, threading them into the internal proteolytic cavity for hydrolysis into small peptide fragments. The m-AAA protease exerts a dual role in the mitochondrial inner membrane: it mediates the processing of specific regulatory proteins and ensures protein quality control by degrading misfolded polypeptides. Mediates protein maturation of the mitochondrial ribosomal subunit MRPL32/bL32m by catalyzing the cleavage of the presequence of MRPL32/bL32m prior to assembly into the mitochondrial ribosome. Acts as a regulator of calcium in neurons by mediating degradation of SMDT1/EMRE before its assembly with the uniporter complex, limiting the availability of SMDT1/EMRE for MCU assembly and promoting efficient assembly of gatekeeper subunits with MCU. Also regulates mitochondrial calcium by catalyzing degradation of MCU. Plays a role in the formation and regulation of the mitochondrial permeability transition pore (mPTP) and its proteolytic activity is dispensable for this function. In Homo sapiens (Human), this protein is Mitochondrial inner membrane m-AAA protease component paraplegin.